Here is a 426-residue protein sequence, read N- to C-terminus: 6-Hydroxy-7-prenyldeoxybrevianamide E synthase notC (426 aa).

Position 94 (glutamate 94) interacts with substrate. 3 residues coordinate dimethylallyl diphosphate: arginine 105, lysine 191, and tyrosine 193. Tyrosine 195 contributes to the substrate binding site. Residues lysine 267, tyrosine 269, glutamine 352, tyrosine 354, tyrosine 418, and tyrosine 422 each contribute to the dimethylallyl diphosphate site.

It belongs to the tryptophan dimethylallyltransferase family.

It catalyses the reaction 6-hydroxydeoxybrevianamide E + dimethylallyl diphosphate = notoamide S + diphosphate. It functions in the pathway alkaloid biosynthesis. Its activity is regulated as follows. Addition of 5 mM Mg(2+), Ca(2+) or Mn(2+) slightly enhances catalysis (about 100-120%). Significant reduction of enzyme activity (2%-35%) is observed with Cu(2+), Zn(2+), Fe(2+), or Sn(2+) (5 mM). Prenyltransferase; part of the gene cluster that mediates the biosynthesis of notoamide, a fungal indole alkaloid that belongs to a family of natural products containing a characteristic bicyclo[2.2.2]diazaoctane core. The first step of notoamide biosynthesis involves coupling of L-proline and L-tryptophan by the bimodular NRPS notE, to produce cyclo-L-tryptophan-L-proline called brevianamide F. The reverse prenyltransferase notF then acts as a deoxybrevianamide E synthase and converts brevianamide F to deoxybrevianamide E via reverse prenylation at C-2 of the indole ring leading to the bicyclo[2.2.2]diazaoctane core. Deoxybrevianamide E is further hydroxylated at C-6 of the indole ring, likely catalyzed by the cytochrome P450 monooxygenase notG, to yield 6-hydroxy-deoxybrevianamide E. 6-hydroxy-deoxybrevianamide E is a specific substrate of the prenyltransferase notC for normal prenylation at C-7 to produce 6-hydroxy-7-prenyl-deoxybrevianamide, also called notoamide S. As the proposed pivotal branching point in notoamide biosynthesis, notoamide S can be diverted to notoamide E through an oxidative pyran ring closure putatively catalyzed by either notH cytochrome P450 monooxygenase or the notD FAD-linked oxidoreductase. This step would be followed by an indole 2,3-epoxidation-initiated pinacol-like rearrangement catalyzed by the notB FAD-dependent monooxygenase leading to the formation of notoamide C and notoamide D. On the other hand notoamide S is converted to notoamide T by notH (or notD), a bifunctional oxidase that also functions as the intramolecular Diels-Alderase responsible for generation of (+)-notoamide T. To generate antipodal (-)-notoaminide T, notH' (or notD') in Aspergillus versicolor is expected to catalyze a Diels-Alder reaction leading to the opposite stereochemistry. The remaining oxidoreductase notD (or notH) likely catalyzes the oxidative pyran ring formation to yield (+)-stephacidin A. The FAD-dependent monooxygenase notI is highly similar to notB and is predicted to catalyze a similar conversion from (+)-stephacidin A to (-)-notoamide B via the 2,3-epoxidation of (+)-stephacidin A followed by a pinacol-type rearrangement. Finally, it remains unclear which enzyme could be responsible for the final hydroxylation steps leading to notoamide A and sclerotiamide. The polypeptide is 6-Hydroxy-7-prenyldeoxybrevianamide E synthase notC (Aspergillus sp. (strain MF297-2)).